The sequence spans 142 residues: Large ribosomal subunit protein uL13 (142 aa).

It belongs to the universal ribosomal protein uL13 family. In terms of assembly, part of the 50S ribosomal subunit.

Functionally, this protein is one of the early assembly proteins of the 50S ribosomal subunit, although it is not seen to bind rRNA by itself. It is important during the early stages of 50S assembly. This Syntrophus aciditrophicus (strain SB) protein is Large ribosomal subunit protein uL13.